The sequence spans 203 residues: Signal peptidase I (203 aa).

The segment at 1–26 (MSSESDSPTPQTPPAQPAASQPKADS) is disordered. Residues 1–33 (MSSESDSPTPQTPPAQPAASQPKADSPLMEGIK) are Cytoplasmic-facing. Positions 17 to 26 (PAASQPKADS) are enriched in low complexity. The chain crosses the membrane as a helical span at residues 34–50 (TIGLSVVLALGIRTFVA). The Extracellular segment spans residues 51 to 203 (EARYIPSESM…LGELGPPPSY (153 aa)). Catalysis depends on residues S59 and K109.

This sequence belongs to the peptidase S26 family.

It localises to the cell membrane. It catalyses the reaction Cleavage of hydrophobic, N-terminal signal or leader sequences from secreted and periplasmic proteins.. The chain is Signal peptidase I (lepB) from Leptolyngbya laminosa (Phormidium laminosum).